Consider the following 120-residue polypeptide: Large ribosomal subunit protein uL18 (120 aa).

This sequence belongs to the universal ribosomal protein uL18 family. Part of the 50S ribosomal subunit; part of the 5S rRNA/L5/L18/L25 subcomplex. Contacts the 5S and 23S rRNAs.

Functionally, this is one of the proteins that bind and probably mediate the attachment of the 5S RNA into the large ribosomal subunit, where it forms part of the central protuberance. This Rhodopseudomonas palustris (strain BisB5) protein is Large ribosomal subunit protein uL18.